Reading from the N-terminus, the 476-residue chain is Protein DETOXIFICATION 4 (476 aa).

12 consecutive transmembrane segments (helical) span residues alanine 35–valine 55, glycine 66–valine 86, isoleucine 117–leucine 137, leucine 154–glutamine 174, leucine 176–tryptophan 196, glycine 208–valine 228, alanine 260–leucine 280, valine 289–alanine 309, leucine 332–phenylalanine 352, valine 370–leucine 390, valine 408–leucine 428, and leucine 433–alanine 453.

Belongs to the multi antimicrobial extrusion (MATE) (TC 2.A.66.1) family.

It localises to the membrane. This chain is Protein DETOXIFICATION 4, found in Arabidopsis thaliana (Mouse-ear cress).